A 160-amino-acid polypeptide reads, in one-letter code: Ribonuclease H (160 aa).

The region spanning Pro5 to Glu146 is the RNase H type-1 domain. Asp14, Glu52, Asp74, and Asp138 together coordinate Mg(2+).

It belongs to the RNase H family. As to quaternary structure, monomer. Requires Mg(2+) as cofactor.

It is found in the cytoplasm. It catalyses the reaction Endonucleolytic cleavage to 5'-phosphomonoester.. In terms of biological role, endonuclease that specifically degrades the RNA of RNA-DNA hybrids. The protein is Ribonuclease H of Acidiphilium cryptum (strain JF-5).